We begin with the raw amino-acid sequence, 250 residues long: Ubiquinone/menaquinone biosynthesis C-methyltransferase UbiE (250 aa).

Residues threonine 74, aspartate 94, 122–123 (DA), and serine 139 contribute to the S-adenosyl-L-methionine site.

The protein belongs to the class I-like SAM-binding methyltransferase superfamily. MenG/UbiE family.

The enzyme catalyses a 2-demethylmenaquinol + S-adenosyl-L-methionine = a menaquinol + S-adenosyl-L-homocysteine + H(+). It catalyses the reaction a 2-methoxy-6-(all-trans-polyprenyl)benzene-1,4-diol + S-adenosyl-L-methionine = a 5-methoxy-2-methyl-3-(all-trans-polyprenyl)benzene-1,4-diol + S-adenosyl-L-homocysteine + H(+). The protein operates within quinol/quinone metabolism; menaquinone biosynthesis; menaquinol from 1,4-dihydroxy-2-naphthoate: step 2/2. It participates in cofactor biosynthesis; ubiquinone biosynthesis. Methyltransferase required for the conversion of demethylmenaquinol (DMKH2) to menaquinol (MKH2) and the conversion of 2-polyprenyl-6-methoxy-1,4-benzoquinol (DDMQH2) to 2-polyprenyl-3-methyl-6-methoxy-1,4-benzoquinol (DMQH2). This Ruegeria sp. (strain TM1040) (Silicibacter sp.) protein is Ubiquinone/menaquinone biosynthesis C-methyltransferase UbiE.